The primary structure comprises 426 residues: Glutamate-1-semialdehyde 2,1-aminomutase (426 aa).

The residue at position 265 (K265) is an N6-(pyridoxal phosphate)lysine.

This sequence belongs to the class-III pyridoxal-phosphate-dependent aminotransferase family. HemL subfamily. Homodimer. Pyridoxal 5'-phosphate serves as cofactor.

The protein localises to the cytoplasm. It catalyses the reaction (S)-4-amino-5-oxopentanoate = 5-aminolevulinate. It functions in the pathway porphyrin-containing compound metabolism; protoporphyrin-IX biosynthesis; 5-aminolevulinate from L-glutamyl-tRNA(Glu): step 2/2. In Hydrogenovibrio crunogenus (strain DSM 25203 / XCL-2) (Thiomicrospira crunogena), this protein is Glutamate-1-semialdehyde 2,1-aminomutase.